A 247-amino-acid polypeptide reads, in one-letter code: DNA polymerase sliding clamp 1 (247 aa).

It belongs to the PCNA family. Homotrimer. The subunits circularize to form a toroid; DNA passes through its center. Replication factor C (RFC) is required to load the toroid on the DNA.

Sliding clamp subunit that acts as a moving platform for DNA processing. Responsible for tethering the catalytic subunit of DNA polymerase and other proteins to DNA during high-speed replication. In Sulfolobus acidocaldarius (strain ATCC 33909 / DSM 639 / JCM 8929 / NBRC 15157 / NCIMB 11770), this protein is DNA polymerase sliding clamp 1.